A 205-amino-acid polypeptide reads, in one-letter code: Holliday junction branch migration complex subunit RuvA (205 aa).

The tract at residues 1 to 62 is domain I; sequence MFEYVTGYVE…EDIMALYGFK (62 aa). Residues 63 to 141 are domain II; that stretch reads TREERLLFTK…DVVPDVFVDL (79 aa). Residues 142-152 are flexible linker; sequence FSDEERFDEKK. The segment at 153 to 205 is domain III; sequence GSSTELDEALEALRALGYAEREINRVLPELLKESLTTDQYIKKALSLLLNGKR.

Belongs to the RuvA family. Homotetramer. Forms an RuvA(8)-RuvB(12)-Holliday junction (HJ) complex. HJ DNA is sandwiched between 2 RuvA tetramers; dsDNA enters through RuvA and exits via RuvB. An RuvB hexamer assembles on each DNA strand where it exits the tetramer. Each RuvB hexamer is contacted by two RuvA subunits (via domain III) on 2 adjacent RuvB subunits; this complex drives branch migration. In the full resolvosome a probable DNA-RuvA(4)-RuvB(12)-RuvC(2) complex forms which resolves the HJ.

The protein resides in the cytoplasm. Functionally, the RuvA-RuvB-RuvC complex processes Holliday junction (HJ) DNA during genetic recombination and DNA repair, while the RuvA-RuvB complex plays an important role in the rescue of blocked DNA replication forks via replication fork reversal (RFR). RuvA specifically binds to HJ cruciform DNA, conferring on it an open structure. The RuvB hexamer acts as an ATP-dependent pump, pulling dsDNA into and through the RuvAB complex. HJ branch migration allows RuvC to scan DNA until it finds its consensus sequence, where it cleaves and resolves the cruciform DNA. This is Holliday junction branch migration complex subunit RuvA from Bacillus cytotoxicus (strain DSM 22905 / CIP 110041 / 391-98 / NVH 391-98).